A 196-amino-acid polypeptide reads, in one-letter code: Ribonuclease HII (196 aa).

The region spanning G9–L196 is the RNase H type-2 domain. A divalent metal cation-binding residues include D15, E16, and D107.

The protein belongs to the RNase HII family. Mn(2+) is required as a cofactor. The cofactor is Mg(2+).

The protein localises to the cytoplasm. It catalyses the reaction Endonucleolytic cleavage to 5'-phosphomonoester.. Its function is as follows. Endonuclease that specifically degrades the RNA of RNA-DNA hybrids. This is Ribonuclease HII from Dechloromonas aromatica (strain RCB).